The primary structure comprises 424 residues: GTPase Obg (424 aa).

An Obg domain is found at 1-158 (MFIDTAKIFV…RWIKLELKLL (158 aa)). One can recognise an OBG-type G domain in the interval 159–331 (ADVGLIGFPN…LMKEAARLLS (173 aa)). Residues 165–172 (GFPNVGKS), 190–194 (FTTLK), 212–215 (DIPG), 282–285 (NKSD), and 312–314 (SAA) each bind GTP. Residues S172 and T192 each coordinate Mg(2+). Residues 345 to 424 (RFIEEEKRFT…LNDFEFDFLL (80 aa)) enclose the OCT domain.

The protein belongs to the TRAFAC class OBG-HflX-like GTPase superfamily. OBG GTPase family. As to quaternary structure, monomer. It depends on Mg(2+) as a cofactor.

The protein localises to the cytoplasm. Its function is as follows. An essential GTPase which binds GTP, GDP and possibly (p)ppGpp with moderate affinity, with high nucleotide exchange rates and a fairly low GTP hydrolysis rate. Plays a role in control of the cell cycle, stress response, ribosome biogenesis and in those bacteria that undergo differentiation, in morphogenesis control. This is GTPase Obg from Clostridium botulinum (strain Okra / Type B1).